The following is a 512-amino-acid chain: Maturase K (512 aa).

The protein belongs to the intron maturase 2 family. MatK subfamily.

It is found in the plastid. The protein localises to the chloroplast. Functionally, usually encoded in the trnK tRNA gene intron. Probably assists in splicing its own and other chloroplast group II introns. The chain is Maturase K from Koelreuteria paniculata (Goldenrain tree).